The following is a 1482-amino-acid chain: Cystic fibrosis transmembrane conductance regulator (1482 aa).

Topologically, residues 1–77 (MQRSPLEKAN…KLINALRRCF (77 aa)) are cytoplasmic. Residues 78–98 (FWRFVFHGIILYLGEVTKAVQ) traverse the membrane as a helical segment. An ABC transmembrane type-1 1 domain is found at 81–365 (FVFHGIILYL…WAVQTWYDSL (285 aa)). Residues 99–122 (PLLLGRIIASYDPDNKVERSIAIY) lie on the Extracellular side of the membrane. A helical transmembrane segment spans residues 123–146 (LGIGLCLLFIVRTLLLHPAIFGLH). Residues 147 to 195 (HMGMQMRIALFSLIYKKTLKLSSRVLDKISTGQLISLLSNNLNKFDEGL) lie on the Cytoplasmic side of the membrane. Residues 196–216 (ALAHFVWIVPLQVVLLMGLLW) form a helical membrane-spanning segment. At 217-222 (DLLQAS) the chain is on the extracellular side. A helical transmembrane segment spans residues 223-243 (AFCGLAFLIVLALFQAWLGQM). Residues 244–298 (MMKYRERRAGKINERLVITSEMIDNIQSVKAYCWEEAMEKMIENLRETELKLTRK) lie on the Cytoplasmic side of the membrane. A helical membrane pass occupies residues 299–319 (TAYVRYFNSSAFFFSGFFVVF). Residues 320–339 (LAVLPYALIKGIILRKIFTT) are Extracellular-facing. The chain crosses the membrane as a helical span at residues 340–358 (ISFCIVLRMAVTRQFPWAV). Topologically, residues 359–859 (QTWYDSLGAI…YLRYITIHKN (501 aa)) are cytoplasmic. ATP is bound by residues tryptophan 401, serine 434, 458-465 (GSTGAGKT), and glutamine 493. An ABC transporter 1 domain is found at 423–646 (NGDNGLFFSN…RPDFSSKLMG (224 aa)). A lipid anchor (S-palmitoyl cysteine) is attached at cysteine 524. 2 positions are modified to phosphoserine: serine 549 and serine 660. The tract at residues 654–832 (SAERRSSILT…DEINEEDLKE (179 aa)) is disordered R region. Phosphoserine; by PKA is present on serine 670. The residue at position 686 (serine 686) is a Phosphoserine. Lysine 688 is covalently cross-linked (Glycyl lysine isopeptide (Lys-Gly) (interchain with G-Cter in ubiquitin)). Serine 700, serine 712, serine 737, serine 769, serine 796, and serine 814 each carry phosphoserine. Residues 860 to 880 (LVFVLIWCLVIFLVEVAASLV) traverse the membrane as a helical segment. The region spanning 860–1156 (LVFVLIWCLV…AVNSSIDVDS (297 aa)) is the ABC transmembrane type-1 2 domain. Residues 881–919 (GLWLLEDISFKDKTNGTNGANNTFPVIITDTSKYYLFYI) lie on the Extracellular side of the membrane. Residues asparagine 895 and asparagine 901 are each glycosylated (N-linked (GlcNAc...) asparagine). A discontinuously helical membrane pass occupies residues 920–940 (YVGIADTFFALGIFRGLPLVH). The Cytoplasmic segment spans residues 941 to 991 (TLISVSKILHHKMLYSVLKAPMSTFNTLKPGGILNRFSKDIAILDDLLPLT). Residues 992–1012 (IFDFIQLILIVVGALIVVSAI) form a helical membrane-spanning segment. Residues 1013–1014 (RP) are Extracellular-facing. The chain crosses the membrane as a helical span at residues 1015–1035 (YIFLATVPVIIAFIMLRAYFL). At 1036 to 1096 (QTSQQLKQLE…TASWFLYLST (61 aa)) the chain is on the cytoplasmic side. A helical transmembrane segment spans residues 1097-1117 (LRWFQMRIELVFVIFFIAVTF). The Extracellular segment spans residues 1118-1131 (ISILTTGDGEGRVG). Residues 1132–1152 (ILLTLAMNIMSTLQWAVNSSI) traverse the membrane as a helical segment. Residues 1153–1482 (DVDSLMRSVS…TEEEVQETRL (330 aa)) lie on the Cytoplasmic side of the membrane. One can recognise an ABC transporter 2 domain in the interval 1212-1445 (MIVKDLTAKY…KSLYRQAISH (234 aa)). ATP contacts are provided by residues tyrosine 1221 and 1246 to 1253 (GRTGSGKS). Residues 1388 to 1482 (RVLKNAFANC…TEEEVQETRL (95 aa)) form an interaction with GORASP2 region. Cysteine 1397 is lipidated: S-palmitoyl cysteine. Serine 1446 and serine 1458 each carry phosphoserine. The PDZ-binding signature appears at 1480–1482 (TRL).

Belongs to the ABC transporter superfamily. ABCC family. CFTR transporter (TC 3.A.1.202) subfamily. As to quaternary structure, monomer; does not require oligomerization for channel activity. May form oligomers in the membrane. Interacts with SLC26A3, SLC26A6 and NHERF1. Interacts with SHANK2. Interacts with MYO6. Interacts (via C-terminus) with GOPC (via PDZ domain); this promotes CFTR internalization and thereby decreases channel activity. Interacts with SLC4A7 through NHERF1. Found in a complex with MYO5B and RAB11A. Interacts with ANO1. Interacts with SLC26A8. Interacts with AHCYL1; the interaction increases CFTR activity. Interacts with CSE1L. The core-glycosylated form interacts with GORASP2 (via PDZ GRASP-type 1 domain) in respone to ER stress. Interacts with MARCHF2; the interaction leads to CFTR ubiqtuitination and degradation. Interacts with ADGRG2. In terms of processing, N-glycosylated. Phosphorylated; cAMP treatment promotes phosphorylation and activates the channel. Dephosphorylation decreases the ATPase activity (in vitro). Phosphorylation at PKA sites activates the channel. Phosphorylation at PKC sites enhances the response to phosphorylation by PKA. Phosphorylated by AMPK; this inhibits channel activity. Post-translationally, ubiquitinated, leading to its degradation in the lysosome. Deubiquitination by USP10 in early endosomes enhances its endocytic recycling to the cell membrane. Ubiquitinated by RNF185 during ER stress. Ubiquitinated by MARCHF2.

It localises to the apical cell membrane. Its subcellular location is the early endosome membrane. It is found in the cell membrane. The protein localises to the recycling endosome membrane. The protein resides in the endoplasmic reticulum membrane. It localises to the nucleus. It carries out the reaction ATP + H2O + closed Cl(-) channel = ADP + phosphate + open Cl(-) channel.. The catalysed reaction is chloride(in) = chloride(out). It catalyses the reaction hydrogencarbonate(in) = hydrogencarbonate(out). The enzyme catalyses ATP + H2O = ADP + phosphate + H(+). In terms of biological role, epithelial ion channel that plays an important role in the regulation of epithelial ion and water transport and fluid homeostasis. Mediates the transport of chloride ions across the cell membrane. Possesses an intrinsic ATPase activity and utilizes ATP to gate its channel; the passive flow of anions through the channel is gated by cycles of ATP binding and hydrolysis by the ATP-binding domains. The ion channel is also permeable to HCO(3)(-); selectivity depends on the extracellular chloride concentration. Exerts its function also by modulating the activity of other ion channels and transporters. Contributes to the regulation of the pH and the ion content of the epithelial fluid layer. Modulates the activity of the epithelial sodium channel (ENaC) complex, in part by regulating the cell surface expression of the ENaC complex. May regulate bicarbonate secretion and salvage in epithelial cells by regulating the transporter SLC4A7. Can inhibit the chloride channel activity of ANO1. Plays a role in the chloride and bicarbonate homeostasis during sperm epididymal maturation and capacitation. The chain is Cystic fibrosis transmembrane conductance regulator from Didelphis virginiana (North American opossum).